The sequence spans 726 residues: Peroxisomal bifunctional enzyme (726 aa).

Residues Met1 to Ser284 form an enoyl-CoA hydratase / isomerase region. Lys38 carries the N6-succinyllysine modification. A substrate-binding site is contributed by Gly103. Lys167 carries the post-translational modification N6-acetyllysine; alternate. Position 167 is an N6-succinyllysine; alternate (Lys167). At Lys173 the chain carries N6-acetyllysine. Lys185 carries the post-translational modification N6-succinyllysine. N6-acetyllysine; alternate is present on Lys221. Position 221 is an N6-succinyllysine; alternate (Lys221). 3 positions are modified to N6-succinyllysine: Lys282, Lys292, and Lys333. The 3-hydroxyacyl-CoA dehydrogenase stretch occupies residues Thr285–Gly575. N6-acetyllysine is present on residues Lys348 and Lys352. The disordered stretch occupies residues Lys352 to Ser371. A compositionally biased stretch (polar residues) spans Ser353–Ser371. Residue Lys467 is modified to N6-acetyllysine. Lys535 is modified (N6-succinyllysine). N6-acetyllysine; alternate is present on residues Lys587, Lys594, and Lys713. Residues Lys587, Lys594, and Lys713 each carry the N6-succinyllysine; alternate modification. Positions Ser724–Leu726 match the Microbody targeting signal motif. At Lys725 the chain carries N6-succinyllysine.

The protein in the N-terminal section; belongs to the enoyl-CoA hydratase/isomerase family. In the C-terminal section; belongs to the 3-hydroxyacyl-CoA dehydrogenase family. Monomer. In terms of processing, acetylated, leading to enhanced enzyme activity. Acetylation is enhanced by up to 80% after treatment either with trichostin A (TSA) or with nicotinamide (NAM) with highest increase on Lys-348. Acetylation and enzyme activity increased by about 1.5% on addition of fatty acids.

Its subcellular location is the peroxisome. The enzyme catalyses a (3S)-3-hydroxyacyl-CoA = a (2E)-enoyl-CoA + H2O. The catalysed reaction is a 4-saturated-(3S)-3-hydroxyacyl-CoA = a (3E)-enoyl-CoA + H2O. It catalyses the reaction a (3Z)-enoyl-CoA = a 4-saturated (2E)-enoyl-CoA. It carries out the reaction a (3E)-enoyl-CoA = a 4-saturated (2E)-enoyl-CoA. The enzyme catalyses a (3S)-3-hydroxyacyl-CoA + NAD(+) = a 3-oxoacyl-CoA + NADH + H(+). The catalysed reaction is (2S,3S)-3-hydroxy-2-methylbutanoyl-CoA = (2E)-2-methylbut-2-enoyl-CoA + H2O. It catalyses the reaction (3S)-hydroxyhexadecanoyl-CoA + NAD(+) = 3-oxohexadecanoyl-CoA + NADH + H(+). It carries out the reaction (3S)-hydroxyhexadecanoyl-CoA = (2E)-hexadecenoyl-CoA + H2O. The enzyme catalyses (2E)-hexadecenedioyl-CoA + H2O = (3S)-hydroxyhexadecanedioyl-CoA. The catalysed reaction is (3S)-hydroxyhexadecanedioyl-CoA + NAD(+) = 3-oxohexadecanedioyl-CoA + NADH + H(+). It catalyses the reaction (3E,5Z)-tetradecadienoyl-CoA = (2E,5Z)-tetradecadienoyl-CoA. It carries out the reaction (3E,5Z)-octadienoyl-CoA = (2E,5Z)-octadienoyl-CoA. The enzyme catalyses (3S)-hydroxydecanoyl-CoA + NAD(+) = 3-oxodecanoyl-CoA + NADH + H(+). The catalysed reaction is (3E)-decenoyl-CoA = (2E)-decenoyl-CoA. It catalyses the reaction (3Z)-hexenoyl-CoA = (2E)-hexenoyl-CoA. It carries out the reaction (3E)-hexenoyl-CoA = (2E)-hexenoyl-CoA. The enzyme catalyses (3S)-hydroxydecanoyl-CoA = (2E)-decenoyl-CoA + H2O. The catalysed reaction is (3S)-hydroxyhexanoyl-CoA = (2E)-hexenoyl-CoA + H2O. The protein operates within lipid metabolism; fatty acid beta-oxidation. Enzyme activity enhanced by acetylation. Peroxisomal trifunctional enzyme possessing 2-enoyl-CoA hydratase, 3-hydroxyacyl-CoA dehydrogenase, and delta 3, delta 2-enoyl-CoA isomerase activities. Catalyzes two of the four reactions of the long chain fatty acids peroxisomal beta-oxidation pathway. Can also use branched-chain fatty acids such as 2-methyl-2E-butenoyl-CoA as a substrate, which is hydrated into (2S,3S)-3-hydroxy-2-methylbutanoyl-CoA. Optimal isomerase for 2,5 double bonds into 3,5 form isomerization in a range of enoyl-CoA species. Also able to isomerize both 3-cis and 3-trans double bonds into the 2-trans form in a range of enoyl-CoA species. Regulates the amount of medium-chain dicarboxylic fatty acids which are essential regulators of all fatty acid oxidation pathways. Also involved in the degradation of long-chain dicarboxylic acids through peroxisomal beta-oxidation. This chain is Peroxisomal bifunctional enzyme (EHHADH), found in Cavia porcellus (Guinea pig).